Reading from the N-terminus, the 432-residue chain is Short/branched chain specific acyl-CoA dehydrogenase, mitochondrial (432 aa).

The transit peptide at 1–33 (MEGLAVRLLRGSRLLRRNFPTCLSSWKIPPHVS) directs the protein to the mitochondrion. Lys-70 bears the N6-acetyllysine; alternate mark. Lys-70 carries the post-translational modification N6-succinyllysine; alternate. Residues 174–183 (FCLSEAGAGS) and 207–209 (WIS) contribute to the FAD site. Ser-183 is a binding site for substrate. Phosphoserine is present on Ser-183. Residues Tyr-229 and Tyr-283 each contribute to the substrate site. Position 284 is an N6-acetyllysine; alternate (Lys-284). The residue at position 284 (Lys-284) is an N6-succinyllysine; alternate. 291-294 (NEGR) lines the substrate pocket. Residues Arg-319, Gln-330, and 387-391 (EWMGG) each bind FAD. Catalysis depends on Glu-414, which acts as the Proton acceptor. 416 to 418 (ASN) contributes to the FAD binding site. Residue Lys-426 is modified to N6-acetyllysine.

The protein belongs to the acyl-CoA dehydrogenase family. In terms of assembly, homotetramer. FAD is required as a cofactor.

It is found in the mitochondrion matrix. The enzyme catalyses 2-methylbutanoyl-CoA + oxidized [electron-transfer flavoprotein] + H(+) = (2E)-2-methylbut-2-enoyl-CoA + reduced [electron-transfer flavoprotein]. The catalysed reaction is (2S)-2-methylbutanoyl-CoA + oxidized [electron-transfer flavoprotein] + H(+) = (2E)-2-methylbut-2-enoyl-CoA + reduced [electron-transfer flavoprotein]. It carries out the reaction (2R)-2-methylbutanoyl-CoA + oxidized [electron-transfer flavoprotein] + H(+) = ethylacryloyl-CoA + reduced [electron-transfer flavoprotein]. It catalyses the reaction butanoyl-CoA + oxidized [electron-transfer flavoprotein] + H(+) = (2E)-butenoyl-CoA + reduced [electron-transfer flavoprotein]. The enzyme catalyses 2-methylpropanoyl-CoA + oxidized [electron-transfer flavoprotein] + H(+) = 2-methylpropenoyl-CoA + reduced [electron-transfer flavoprotein]. The catalysed reaction is hexanoyl-CoA + oxidized [electron-transfer flavoprotein] + H(+) = (2E)-hexenoyl-CoA + reduced [electron-transfer flavoprotein]. It carries out the reaction valproyl-CoA + oxidized [electron-transfer flavoprotein] + H(+) = (2E)-2-propylpent-2-enoyl-CoA + reduced [electron-transfer flavoprotein]. The protein operates within lipid metabolism; mitochondrial fatty acid beta-oxidation. It functions in the pathway amino-acid degradation; L-isoleucine degradation. Its function is as follows. Short and branched chain specific acyl-CoA dehydrogenase that catalyzes the removal of one hydrogen from C-2 and C-3 of the fatty acyl-CoA thioester, resulting in the formation of trans-2-enoyl-CoA. Among the different mitochondrial acyl-CoA dehydrogenases, acts specifically on short and branched chain acyl-CoA derivatives such as (S)-2-methylbutyryl-CoA as well as short straight chain acyl-CoAs such as butyryl-CoA. Plays an important role in the metabolism of L-isoleucine by catalyzing the dehydrogenation of 2-methylbutyryl-CoA, one of the steps of the L-isoleucine catabolic pathway. Can also act on valproyl-CoA, a metabolite of the valproic acid drug. The chain is Short/branched chain specific acyl-CoA dehydrogenase, mitochondrial (ACADSB) from Pongo abelii (Sumatran orangutan).